A 43-amino-acid chain; its full sequence is Cytin chain A (43 aa).

It belongs to the protease inhibitor I13 (potato type I serine protease inhibitor) family. In terms of assembly, heterodimer of an A chain and a B chain, linked by a disulfide bond.

In terms of biological role, inhibitor of chymotrypsin. The polypeptide is Cytin chain A (Theromyzon tessulatum (Duck leech)).